The chain runs to 81 residues: Photosystem I iron-sulfur center (81 aa).

2 4Fe-4S ferredoxin-type domains span residues 2–31 and 39–68; these read SHKI…MIPW and IASA…VRVY. [4Fe-4S] cluster-binding residues include Cys11, Cys14, Cys17, Cys21, Cys48, Cys51, Cys54, and Cys58.

In terms of assembly, the eukaryotic PSI reaction center is composed of at least 11 subunits. [4Fe-4S] cluster is required as a cofactor.

It localises to the plastid. The protein resides in the chloroplast thylakoid membrane. The enzyme catalyses reduced [plastocyanin] + hnu + oxidized [2Fe-2S]-[ferredoxin] = oxidized [plastocyanin] + reduced [2Fe-2S]-[ferredoxin]. Its function is as follows. Apoprotein for the two 4Fe-4S centers FA and FB of photosystem I (PSI); essential for photochemical activity. FB is the terminal electron acceptor of PSI, donating electrons to ferredoxin. The C-terminus interacts with PsaA/B/D and helps assemble the protein into the PSI complex. Required for binding of PsaD and PsaE to PSI. PSI is a plastocyanin-ferredoxin oxidoreductase, converting photonic excitation into a charge separation, which transfers an electron from the donor P700 chlorophyll pair to the spectroscopically characterized acceptors A0, A1, FX, FA and FB in turn. This chain is Photosystem I iron-sulfur center, found in Chara vulgaris (Common stonewort).